A 213-amino-acid polypeptide reads, in one-letter code: Uridine kinase (213 aa).

15 to 22 (GASASGKS) lines the ATP pocket.

Belongs to the uridine kinase family.

The protein localises to the cytoplasm. The enzyme catalyses uridine + ATP = UMP + ADP + H(+). It catalyses the reaction cytidine + ATP = CMP + ADP + H(+). The protein operates within pyrimidine metabolism; CTP biosynthesis via salvage pathway; CTP from cytidine: step 1/3. It participates in pyrimidine metabolism; UMP biosynthesis via salvage pathway; UMP from uridine: step 1/1. This is Uridine kinase from Enterobacter sp. (strain 638).